A 442-amino-acid polypeptide reads, in one-letter code: MGQVPSRRFSLFDRRSWPEARRIAEILRREAIGGGLLLAATVLALGWANSPWSESYQSMLSYQLGPSWAHLDLTLAQWAADGLLAIFFFVAGLELKREFIAGDLRDPRRAAVPVLAACGGVAVPAVLYALVNVGGDASAGWAIPTATDIAFALAVLAVIGRHLPSGLRTFLLTLAVVDDLLAIVIIAVVYTRHLSILPLLGALVPLALFTLLVQRRVRSWWLLLPLAAATWTLVHASGVHATVAGVLLGFAVPVLRGTRAGGPEAGPGLAEHFEHRWRPLSAGVAVPIFAFFSAGVTVDGLSGLSAALSDRAALGVVLGLVVGKPLGIMAATFLVARFTRATLDDGLTWTDVLGLAVLAGIGFTVSLLIGELAFGSGSARDDHVKIAVLTGSLLAALLAAVVLRLRNRVYRRLQEAETADRDHDGIPDVYQDLHRSSPRPWG.

11 consecutive transmembrane segments (helical) span residues 32–52 (IGGG…NSPW), 73–93 (LTLA…VAGL), 111–131 (AVPV…YALV), 139–159 (AGWA…LAVI), 170–190 (FLLT…AVVY), 193–213 (HLSI…TLLV), 234–254 (VHAS…AVPV), 284–304 (VAVP…LSGL), 316–336 (VVLG…FLVA), 352–372 (VLGL…IGEL), and 383–403 (HVKI…AVVL). A compositionally biased stretch (basic and acidic residues) spans 423-435 (HDGIPDVYQDLHR). The segment at 423 to 442 (HDGIPDVYQDLHRSSPRPWG) is disordered.

This sequence belongs to the NhaA Na(+)/H(+) (TC 2.A.33) antiporter family.

Its subcellular location is the cell membrane. It catalyses the reaction Na(+)(in) + 2 H(+)(out) = Na(+)(out) + 2 H(+)(in). Na(+)/H(+) antiporter that extrudes sodium in exchange for external protons. The protein is Na(+)/H(+) antiporter NhaA of Frankia casuarinae (strain DSM 45818 / CECT 9043 / HFP020203 / CcI3).